Consider the following 277-residue polypeptide: Glutamate racemase (277 aa).

Substrate contacts are provided by residues Asp-13 to Ser-14 and Tyr-45 to Gly-46. Catalysis depends on Cys-76, which acts as the Proton donor/acceptor. Asn-77–Thr-78 serves as a coordination point for substrate. Cys-186 acts as the Proton donor/acceptor in catalysis. Thr-187–His-188 serves as a coordination point for substrate.

The protein belongs to the aspartate/glutamate racemases family.

The enzyme catalyses L-glutamate = D-glutamate. It functions in the pathway cell wall biogenesis; peptidoglycan biosynthesis. In terms of biological role, provides the (R)-glutamate required for cell wall biosynthesis. This Ralstonia nicotianae (strain ATCC BAA-1114 / GMI1000) (Ralstonia solanacearum) protein is Glutamate racemase.